The following is a 135-amino-acid chain: Protein Wnt-7a (135 aa).

Disulfide bonds link Cys-3–Cys-17 and Cys-5–Cys-12. Ser-9 carries O-palmitoleoyl serine; by PORCN lipidation. Residues 41–69 are disordered linker; it reads VEPVRASRNKRPTFLKIKKPLSYRKPMDT. Cystine bridges form between Cys-81–Cys-112, Cys-97–Cys-107, Cys-111–Cys-134, and Cys-130–Cys-131. A glycan (N-linked (GlcNAc...) asparagine) is linked at Asn-98.

Belongs to the Wnt family. Palmitoleoylation is required for efficient binding to frizzled receptors. Depalmitoleoylation leads to Wnt signaling pathway inhibition. In terms of tissue distribution, in embryo, in brain and ventral neural tube; in adults, in brain.

Its subcellular location is the secreted. It is found in the extracellular space. The protein localises to the extracellular matrix. Ligand for members of the frizzled family of seven transmembrane receptors that functions in the canonical Wnt/beta-catenin signaling pathway. Plays an important role in embryonic development, including dorsal versus ventral patterning during limb development, skeleton development and urogenital tract development. Required for central nervous system (CNS) angiogenesis and blood-brain barrier regulation. This is Protein Wnt-7a (wnt7a) from Xenopus laevis (African clawed frog).